Reading from the N-terminus, the 296-residue chain is Ribosomal RNA small subunit methyltransferase H (296 aa).

Residues 38–40 (GVH), Glu57, Phe88, Asp103, and His110 each bind S-adenosyl-L-methionine.

It belongs to the methyltransferase superfamily. RsmH family.

It is found in the cytoplasm. It carries out the reaction cytidine(1402) in 16S rRNA + S-adenosyl-L-methionine = N(4)-methylcytidine(1402) in 16S rRNA + S-adenosyl-L-homocysteine + H(+). Specifically methylates the N4 position of cytidine in position 1402 (C1402) of 16S rRNA. This chain is Ribosomal RNA small subunit methyltransferase H, found in Borreliella burgdorferi (strain ZS7) (Borrelia burgdorferi).